The chain runs to 318 residues: Elongation factor Ts, mitochondrial (318 aa).

A mitochondrion-targeting transit peptide spans 1–18; that stretch reads MLLQRFFTRALHSTRQLY.

This sequence belongs to the EF-Ts family.

It is found in the mitochondrion. Functionally, associates with the EF-Tu.GDP complex and induces the exchange of GDP to GTP. It remains bound to the aminoacyl-tRNA.EF-Tu.GTP complex up to the GTP hydrolysis stage on the ribosome. In Drosophila melanogaster (Fruit fly), this protein is Elongation factor Ts, mitochondrial.